Consider the following 162-residue polypeptide: MALRIWASSTANALRLSSATRPHFSPLSRCFSSVLDGLKYANSHEWVKHEGSVATIGITDHAQDHLGEVVFVDLPEAGGSVTKATGFGAVESVKATSDVNSPISGEIVEVNSKLSETPGLINSSPYEDGWMIKVKPSNPSELDSLMGAKEYTKFCEEEDSAH.

The transit peptide at 1–31 directs the protein to the mitochondrion; it reads MALRIWASSTANALRLSSATRPHFSPLSRCF. In terms of domain architecture, Lipoyl-binding spans 53-135; sequence VATIGITDHA…YEDGWMIKVK (83 aa). N6-lipoyllysine is present on K94.

This sequence belongs to the GcvH family. The glycine cleavage system is composed of four proteins: P, T, L and H. It depends on (R)-lipoate as a cofactor.

Its subcellular location is the mitochondrion. Functionally, the glycine cleavage system catalyzes the degradation of glycine. The H protein shuttles the methylamine group of glycine from the P protein to the T protein. The protein is Glycine cleavage system H protein, mitochondrial (GDCSH) of Flaveria pringlei.